Consider the following 159-residue polypeptide: Small ribosomal subunit protein uS15 (159 aa).

The segment covering 1 to 16 (MNKRKEKGKSHSKRPV) has biased composition (basic residues). The disordered stretch occupies residues 1–22 (MNKRKEKGKSHSKRPVRNTPPR).

This sequence belongs to the universal ribosomal protein uS15 family. Part of the 30S ribosomal subunit.

This Ignicoccus hospitalis (strain KIN4/I / DSM 18386 / JCM 14125) protein is Small ribosomal subunit protein uS15.